Here is a 395-residue protein sequence, read N- to C-terminus: Secreted aspartyl protease 1 (395 aa).

Positions 1–20 are cleaved as a signal peptide; that stretch reads MQLSIQAIIGFVVAAGLAVA. Positions 21 to 88 are cleaved as a propeptide — removed in mature form; the sequence is SELPSPMTVN…HLLLDLIDKR (68 aa). N41 carries an N-linked (GlcNAc...) asparagine glycan. The Peptidase A1 domain occupies 105–391; it reads WAGDVQFGQS…DMGKNRMGFA (287 aa). Residues D121 and D283 contribute to the active site. C321 and C352 are joined by a disulfide.

Belongs to the peptidase A1 family.

It is found in the secreted. With respect to regulation, inhibited by pepstatin A. In terms of biological role, dominant secreted aspartyl protease that has a clear preference for aromatic residues in the P1' position directly adjacent to the cleavage site and, in particular, Trp. In addition, it generally cleaves peptides containing Lys, Arg, Phe, Tyr, or Nle (norleucine) in the P1 position, Nle and Glu at P2, and Arg and Val at P2'. Has important roles in facilitating the interaction of the yeast with the external environment. Is able to rapidly hydrolyze Staphylococcus aureus protein A, an important S.aureus virulence factor involved in immune evasion and biofilm formation. Shows anti-biofilm properties and thus plays a role in inter-kingdom interactions, beneficial for host skin health. The protein is Secreted aspartyl protease 1 of Malassezia globosa (strain ATCC MYA-4612 / CBS 7966) (Dandruff-associated fungus).